The following is a 428-amino-acid chain: MSQSDTIFDYKHIWHPYSSMNNPHPCYTVISAKGVYLKLKNRKYMIDGMSSWWAAIHGYNHPVLNKALKKQIRKMSHVMFGGITHPPAISLCRKLISLTPEKLDCVFLSDSGSVAIEVAIKMLIQYWQALGQKRKLFLTIRNGYHGDTFSAMSVSDPKNSFHQIYHNLLPKHLFADAPVSSFYKNWDNEDILSFKKIIEKNSFKIAGVILEPIVQGVGGMNFYHPMYLKQIKILCNHYSIPVIFDEIATGFGRTGKMFAFEHANVVPDILCLGKSITGGTITLAATLTSRHIADTISKGKVGCFMHGPTYMGNPLACAVANANIKILKTNQWKIQVLNIEKQLFKSLMPLINHPYVTDVRVLGAIGVVECSRSINMISIQKFFVENGVWIRPFKKLIYIVPPYIISPHTLKKLTNVISNALNKTELFI.

Trp-52 is a substrate binding site. Residue 112–113 (GS) coordinates pyridoxal 5'-phosphate. Tyr-144 is a binding site for substrate. Asp-245 is a pyridoxal 5'-phosphate binding site. The substrate site is built by Lys-274 and Gly-307. Lys-274 is subject to N6-(pyridoxal phosphate)lysine. 308–309 (PT) is a binding site for pyridoxal 5'-phosphate. Arg-391 is a substrate binding site.

Belongs to the class-III pyridoxal-phosphate-dependent aminotransferase family. BioA subfamily. As to quaternary structure, homodimer. Requires pyridoxal 5'-phosphate as cofactor.

The protein localises to the cytoplasm. The catalysed reaction is (8S)-8-amino-7-oxononanoate + S-adenosyl-L-methionine = S-adenosyl-4-methylsulfanyl-2-oxobutanoate + (7R,8S)-7,8-diammoniononanoate. It functions in the pathway cofactor biosynthesis; biotin biosynthesis; 7,8-diaminononanoate from 8-amino-7-oxononanoate (SAM route): step 1/1. Its function is as follows. Catalyzes the transfer of the alpha-amino group from S-adenosyl-L-methionine (SAM) to 7-keto-8-aminopelargonic acid (KAPA) to form 7,8-diaminopelargonic acid (DAPA). It is the only aminotransferase known to utilize SAM as an amino donor. The protein is Adenosylmethionine-8-amino-7-oxononanoate aminotransferase of Buchnera aphidicola subsp. Acyrthosiphon pisum (strain APS) (Acyrthosiphon pisum symbiotic bacterium).